The sequence spans 800 residues: MSEIIQDLSLEDVLGDRFGRYSKYIIQERALPDVRDGLKPVQRRILYAMYSSGNTHDKNFRKSAKTVGDVIGQYHPHGDSSVYEAMVRLSQDWKLRHVLIEMHGNNGSIDNDPPAAMRYTEAKLSLLAEELLRDINKETVSFIPNYDDTTLEPMVLPSRFPNLLVNGSTGISAGYATDIPPHNLAEVIQATLKYIDNPDITVNQLMKYIKGPDFPTGGIIQGIDGIKKAYESGKGRIIVRSKVEEETLRNGRKQLIITEIPYEVNKSSLVKRIDELRADKKVDGIVEVRDETDRTGLRIAIELKKDVNSESIKNYLYKNSDLQISYNFNMVAISDGRPKLMGIRQIIDSYLNHQIEVVANRTKFELDNAEKRMHIVEGLIKALSILDKVIELIRSSKNKRDAKENLIEVYEFTEEQAEAIVMLQLYRLTNTDIVALEGEHKELEALIKQLRHILDNHDALLNVIKEELNEIKKKFKSERLSLIEAEIEEIKIDKEVMVPSEEVILSMTRHGYIKRTSIRSFNASGVEDIGLKDGDSLLKHQEVNTQDTVLVFTNKGRYLFIPVHKLADIRWKELGQHVSQIVPIEEDEVVINVFNEKDFNTDAFYVFATQNGMIKKSTVPLFKTTRFNKPLIATKVKENDDLISVMRFEKDQLITVITNKGMSLTYNTSELSDTGLRAAGVKSINLKAEDFVVMTEGVSENDTILMATQRGSLKRISFKILQVAKRAQRGITLLKELKKNPHRIVAAHVVTGEHSQYTLYSKSNEEHGLINDIHKSEQYTNGSFIVDTDDFGEVIDMYIS.

The Topo IIA-type catalytic domain maps to 31–495; it reads LPDVRDGLKP…EIEEIKIDKE (465 aa). Catalysis depends on Tyr119, which acts as the O-(5'-phospho-DNA)-tyrosine intermediate.

The protein belongs to the type II topoisomerase GyrA/ParC subunit family. ParC type 2 subfamily. Heterotetramer composed of ParC and ParE.

The protein localises to the cell membrane. The catalysed reaction is ATP-dependent breakage, passage and rejoining of double-stranded DNA.. Functionally, topoisomerase IV is essential for chromosome segregation. It relaxes supercoiled DNA. Performs the decatenation events required during the replication of a circular DNA molecule. The sequence is that of DNA topoisomerase 4 subunit A from Staphylococcus aureus (strain NCTC 8325 / PS 47).